A 389-amino-acid polypeptide reads, in one-letter code: Transcription factor TGAL10 (389 aa).

The tract at residues 80-110 (DDQDNAAALQESPRHASDSFEQEASKPRDKI) is disordered. Residues 91–110 (SPRHASDSFEQEASKPRDKI) are compositionally biased toward basic and acidic residues. The region spanning 107–151 (RDKIQRRLAQNREAARKSRLRKKAYIQNLETSRMKLAHLEQEITR) is the bZIP domain. The interval 109–129 (KIQRRLAQNREAARKSRLRKK) is basic motif. The interval 135–149 (LETSRMKLAHLEQEI) is leucine-zipper. The 214-residue stretch at 176–389 (VVTFEVEYAQ…LHVRRRAELG (214 aa)) folds into the DOG1 domain. Disordered regions lie at residues 320-345 (TSCD…GDGG) and 370-389 (HRRS…AELG). Over residues 380–389 (LHVRRRAELG) the composition is skewed to basic residues.

It belongs to the bZIP family.

The protein resides in the nucleus. Transcriptional regulator involved in defense response. The chain is Transcription factor TGAL10 from Oryza sativa subsp. japonica (Rice).